Reading from the N-terminus, the 80-residue chain is Spermatid-specific protein S2 (80 aa).

A compositionally biased stretch (basic residues) spans 1 to 36 (VKSRYHQRQYRARKRYAKARRTKKPKRRPKPPRKLR). The disordered stretch occupies residues 1–44 (VKSRYHQRQYRARKRYAKARRTKKPKRRPKPPRKLRYAPSKKQP).

The protein resides in the nucleus. Its subcellular location is the chromosome. Involved in nuclear basic protein transition: histones are replaced by spermatid specific proteins which are themselves replaced by protamines in late spermatids. The chain is Spermatid-specific protein S2 from Scyliorhinus canicula (Small-spotted catshark).